Here is a 74-residue protein sequence, read N- to C-terminus: uncharacterized protein (74 aa).

This is an uncharacterized protein from Sinorhizobium fredii (strain NBRC 101917 / NGR234).